Consider the following 480-residue polypeptide: ATP-dependent rRNA helicase RRP3 (480 aa).

Composition is skewed to basic and acidic residues over residues 1–17 and 33–46; these read MAKA…KEES and DTTK…EPKK. The tract at residues 1–63 is disordered; it reads MAKATEKRVK…VEVDESEEQT (63 aa). A Q motif motif is present at residues 64-92; that stretch reads KTFKDLGVIDSICETCEELKFTKPTPIQA. Residues 95 to 266 enclose the Helicase ATP-binding domain; that stretch reads IPYALEGRDI…RASLVDPVRV (172 aa). 108 to 115 lines the ATP pocket; sequence AQTGSGKT. The DEAD box motif lies at 214–217; it reads DEAD. In terms of domain architecture, Helicase C-terminal spans 277-437; the sequence is NLLQYMVFCP…SYPLESEAVM (161 aa). The segment at 450 to 480 is disordered; the sequence is AIQEMKGEDGTKKRSKFDKKRRRDEMDIGEQ. Positions 462 to 471 are enriched in basic residues; the sequence is KRSKFDKKRR.

Belongs to the DEAD box helicase family. DDX47/RRP3 subfamily. As to quaternary structure, interacts with the SSU processome.

Its subcellular location is the nucleus. The catalysed reaction is ATP + H2O = ADP + phosphate + H(+). In terms of biological role, ATP-dependent rRNA helicase required for pre-ribosomal RNA processing. Involved in the maturation of the 35S-pre-rRNA and to its cleavage to mature 18S rRNA. This is ATP-dependent rRNA helicase RRP3 from Yarrowia lipolytica (strain CLIB 122 / E 150) (Yeast).